The primary structure comprises 373 residues: Erythronate-4-phosphate dehydrogenase (373 aa).

Positions 45 and 67 each coordinate substrate. NAD(+) contacts are provided by residues Asp-147, 207-209 (ASR), and Asp-233. The active site involves Arg-209. The active site involves Glu-238. His-255 functions as the Proton donor in the catalytic mechanism. NAD(+) is bound at residue Gly-258.

The protein belongs to the D-isomer specific 2-hydroxyacid dehydrogenase family. PdxB subfamily. Homodimer.

It is found in the cytoplasm. The enzyme catalyses 4-phospho-D-erythronate + NAD(+) = (R)-3-hydroxy-2-oxo-4-phosphooxybutanoate + NADH + H(+). Its pathway is cofactor biosynthesis; pyridoxine 5'-phosphate biosynthesis; pyridoxine 5'-phosphate from D-erythrose 4-phosphate: step 2/5. Catalyzes the oxidation of erythronate-4-phosphate to 3-hydroxy-2-oxo-4-phosphonooxybutanoate. The chain is Erythronate-4-phosphate dehydrogenase from Pseudoalteromonas translucida (strain TAC 125).